The sequence spans 335 residues: MSLDIAQIALHQLIKRDEQTLEMVLRDSLLSTNAAVEEMMAELHRVYSAKSKAYGLFNEQSELADALRACRKGDEDFLSFSRAATGRLRDELAKYPFAEGGIVLFCQYRYLAVDYLLISVLNSCNSMRVNEQLDISTTHYLDINHADIVARIDLTEWETNPESTRYLTFLKGRVGRKVSDFFMDFLAASEGLDTKAQNRGLLKAVDEYCDEAQLDKNERQNYRQQVYSYCNEQLQSGEEIELASLSQELPPLGEKTFQQFSTEQGYELEESFPADRGTLRQLTKFAGSGGGISLNFDALLLGERIFWDPATDTLTIKGTPPNLRDQLQRRTSSSK.

It belongs to the YejK family.

It localises to the cytoplasm. Its subcellular location is the nucleoid. In Pectobacterium carotovorum subsp. carotovorum (strain PC1), this protein is Nucleoid-associated protein PC1_1634.